Consider the following 425-residue polypeptide: Elongation factor 1-alpha (425 aa).

One can recognise a tr-type G domain in the interval 5–221 (KPHMNLAVIG…DLFKMPDMPT (217 aa)). A G1 region spans residues 14–21 (GHIDHGKS). Residue 14 to 21 (GHIDHGKS) participates in GTP binding. Ser-21 provides a ligand contact to Mg(2+). A G2 region spans residues 70 to 74 (GITID). The tract at residues 91–94 (DCPG) is G3. GTP-binding positions include 91–95 (DCPGH) and 146–149 (NKMD). Residues 146–149 (NKMD) are G4. The G5 stretch occupies residues 185-187 (SAF).

Belongs to the TRAFAC class translation factor GTPase superfamily. Classic translation factor GTPase family. EF-Tu/EF-1A subfamily.

The protein localises to the cytoplasm. The enzyme catalyses GTP + H2O = GDP + phosphate + H(+). GTP hydrolase that promotes the GTP-dependent binding of aminoacyl-tRNA to the A-site of ribosomes during protein biosynthesis. In Methanocorpusculum labreanum (strain ATCC 43576 / DSM 4855 / Z), this protein is Elongation factor 1-alpha.